Consider the following 164-residue polypeptide: Thioredoxin domain-containing protein R443 (164 aa).

A helical membrane pass occupies residues 8 to 28; that stretch reads HIVLIVLAIILILWIISLLLC. One can recognise a Thioredoxin domain in the interval 36–163; the sequence is YQVPIIQPMQ…LTQFIRSNMN (128 aa). A disulfide bond links Cys-84 and Cys-87.

This sequence belongs to the thioredoxin family.

It localises to the host membrane. The protein resides in the virion. The polypeptide is Thioredoxin domain-containing protein R443 (Acanthamoeba polyphaga mimivirus (APMV)).